The primary structure comprises 206 residues: dCTP deaminase, dUMP-forming (206 aa).

DCTP contacts are provided by residues 117-122 (RSSFGR), Asp135, 143-145 (TLE), Gln163, Tyr177, Lys184, and Gln188. Glu145 serves as the catalytic Proton donor/acceptor.

It belongs to the dCTP deaminase family. As to quaternary structure, homotrimer.

It catalyses the reaction dCTP + 2 H2O = dUMP + NH4(+) + diphosphate. It functions in the pathway pyrimidine metabolism; dUMP biosynthesis; dUMP from dCTP: step 1/1. In terms of biological role, bifunctional enzyme that catalyzes both the deamination of dCTP to dUTP and the hydrolysis of dUTP to dUMP without releasing the toxic dUTP intermediate. This is dCTP deaminase, dUMP-forming from Methanococcus maripaludis (strain C6 / ATCC BAA-1332).